The primary structure comprises 658 residues: Threonine--tRNA ligase (658 aa).

The region spanning 1–61 is the TGS domain; the sequence is MSDVRVIIQR…KDGETVEAVE (61 aa). The interval 259 to 554 is catalytic; the sequence is DHRKLGSELD…LLEHYAGAMP (296 aa). 3 residues coordinate Zn(2+): cysteine 353, histidine 404, and histidine 531.

The protein belongs to the class-II aminoacyl-tRNA synthetase family. As to quaternary structure, homodimer. Zn(2+) is required as a cofactor.

The protein resides in the cytoplasm. The catalysed reaction is tRNA(Thr) + L-threonine + ATP = L-threonyl-tRNA(Thr) + AMP + diphosphate + H(+). Functionally, catalyzes the attachment of threonine to tRNA(Thr) in a two-step reaction: L-threonine is first activated by ATP to form Thr-AMP and then transferred to the acceptor end of tRNA(Thr). Also edits incorrectly charged L-seryl-tRNA(Thr). This is Threonine--tRNA ligase from Streptomyces coelicolor (strain ATCC BAA-471 / A3(2) / M145).